Here is a 137-residue protein sequence, read N- to C-terminus: Large ribosomal subunit protein uL16c (137 aa).

The protein belongs to the universal ribosomal protein uL16 family. As to quaternary structure, part of the 50S ribosomal subunit.

The protein localises to the plastid. Its subcellular location is the chloroplast. The protein is Large ribosomal subunit protein uL16c of Hordeum vulgare (Barley).